We begin with the raw amino-acid sequence, 682 residues long: Putative protein RhsE (682 aa).

A compositionally biased stretch (basic and acidic residues) spans 348-360 (ENGEREKAQRRSL). The disordered stretch occupies residues 348–372 (ENGEREKAQRRSLAETLQQEGSENG).

Belongs to the RHS family.

Rhs elements have a nonessential function. They may play an important role in the natural ecology of the cell. The chain is Putative protein RhsE (rhsE) from Escherichia coli (strain K12).